A 426-amino-acid chain; its full sequence is Adenylosuccinate synthetase (426 aa).

Residues 12-18 and 40-42 contribute to the GTP site; these read GDEGKGK and GHT. D13 acts as the Proton acceptor in catalysis. Residues D13 and G40 each contribute to the Mg(2+) site. IMP-binding positions include 13 to 16, 38 to 41, T130, R144, Q224, T239, and R303; these read DEGK and NAGH. H41 acts as the Proton donor in catalysis. 299-305 is a substrate binding site; it reads TVTNRVR. Residues R305, 331–333, and 413–415 contribute to the GTP site; these read KLD and STG.

This sequence belongs to the adenylosuccinate synthetase family. Homodimer. Mg(2+) is required as a cofactor.

It localises to the cytoplasm. The enzyme catalyses IMP + L-aspartate + GTP = N(6)-(1,2-dicarboxyethyl)-AMP + GDP + phosphate + 2 H(+). It functions in the pathway purine metabolism; AMP biosynthesis via de novo pathway; AMP from IMP: step 1/2. Functionally, plays an important role in the de novo pathway of purine nucleotide biosynthesis. Catalyzes the first committed step in the biosynthesis of AMP from IMP. This is Adenylosuccinate synthetase from Anaplasma marginale (strain St. Maries).